Reading from the N-terminus, the 486-residue chain is tRNA sulfurtransferase (486 aa).

The region spanning 60–166 (QKICAMLINI…DNQLFIIIKR (107 aa)) is the THUMP domain. ATP-binding positions include 184 to 185 (LI), Lys266, Gly288, and Gln297. Cys345 and Cys458 are disulfide-bonded. The Rhodanese domain maps to 406 to 484 (LDSTDVVLDI…GFSNVKIYRP (79 aa)). Cys458 serves as the catalytic Cysteine persulfide intermediate.

This sequence belongs to the ThiI family.

Its subcellular location is the cytoplasm. The catalysed reaction is [ThiI sulfur-carrier protein]-S-sulfanyl-L-cysteine + a uridine in tRNA + 2 reduced [2Fe-2S]-[ferredoxin] + ATP + H(+) = [ThiI sulfur-carrier protein]-L-cysteine + a 4-thiouridine in tRNA + 2 oxidized [2Fe-2S]-[ferredoxin] + AMP + diphosphate. It carries out the reaction [ThiS sulfur-carrier protein]-C-terminal Gly-Gly-AMP + S-sulfanyl-L-cysteinyl-[cysteine desulfurase] + AH2 = [ThiS sulfur-carrier protein]-C-terminal-Gly-aminoethanethioate + L-cysteinyl-[cysteine desulfurase] + A + AMP + 2 H(+). Its pathway is cofactor biosynthesis; thiamine diphosphate biosynthesis. In terms of biological role, catalyzes the ATP-dependent transfer of a sulfur to tRNA to produce 4-thiouridine in position 8 of tRNAs, which functions as a near-UV photosensor. Also catalyzes the transfer of sulfur to the sulfur carrier protein ThiS, forming ThiS-thiocarboxylate. This is a step in the synthesis of thiazole, in the thiamine biosynthesis pathway. The sulfur is donated as persulfide by IscS. This Blochmanniella pennsylvanica (strain BPEN) protein is tRNA sulfurtransferase.